The sequence spans 146 residues: Ribonuclease H (146 aa).

In terms of domain architecture, RNase H type-1 spans 1–143 (MEKKVTIYTD…CDELARLAVR (143 aa)). Residues aspartate 10, glutamate 48, aspartate 70, and aspartate 135 each coordinate Mg(2+).

It belongs to the RNase H family. As to quaternary structure, monomer. The cofactor is Mg(2+).

The protein localises to the cytoplasm. The catalysed reaction is Endonucleolytic cleavage to 5'-phosphomonoester.. Functionally, endonuclease that specifically degrades the RNA of RNA-DNA hybrids. This chain is Ribonuclease H, found in Chlorobium phaeovibrioides (strain DSM 265 / 1930) (Prosthecochloris vibrioformis (strain DSM 265)).